Reading from the N-terminus, the 117-residue chain is Gamma-aminobutyric acid receptor-associated protein-like 2 (117 aa).

Lysine 24 is modified (N6-acetyllysine). Serine 39, serine 87, and serine 88 each carry phosphoserine. Residue glycine 116 is the site of Phosphatidylethanolamine amidated glycine; alternate attachment. Glycine 116 carries Phosphatidylserine amidated glycine; alternate lipidation. Residue phenylalanine 117 is a propeptide, removed in mature form.

It belongs to the ATG8 family. As to quaternary structure, monomer. Interacts with ATG3, ATG7, ATG13 and ULK1. Interacts with TP53INP1 and TP53INP2. Interacts with TBC1D25. Directly interacts with SQSTM1 and BNIP3. Interacts with TECPR2 and PCM1. Interacts with TBC1D5. Interacts with TRIM5. Interacts with MEFV and TRIM21. Interacts with WDFY3. Interacts with UBA5; promoting recruitment of UBA5 to the endoplasmic reticulum membrane. Interacts with GOSR1. Interacts with KBTBD6 and KBTBD7; the interaction is direct. Interacts with reticulophagy regulators RETREG1, RETREG2 and RETREG3. Interacts with IRGM. Interacts with DNM2. Interacts with NCOA4. Interacts with IRGQ. In terms of processing, the precursor molecule is cleaved by ATG4 (ATG4A, ATG4B, ATG4C or ATG4D) to expose the glycine at the C-terminus and form the cytosolic form, GABARAPL2-I. The processed form is then activated by APG7L/ATG7, transferred to ATG3 and conjugated to phosphatidylethanolamine (PE) phospholipid to form the membrane-bound form, GABARAPL2-II. During non-canonical autophagy, the processed form is conjugated to phosphatidylserine (PS) phospholipid. ATG4 proteins also mediate the delipidation of PE-conjugated forms required for GABARAPL2 recycling when autophagosomes fuse with lysosomes. In addition, ATG4B and ATG4D mediate delipidation of ATG8 proteins conjugated to PS during non-canonical autophagy. ATG4B constitutes the major protein for proteolytic activation. ATG4D is the main enzyme for delipidation activity. Post-translationally, phosphorylation at Ser-87 and Ser-88 by TBK1 prevents interaction with ATG4 (ATG4A, ATG4B, ATG4C or ATG4D). Phosphorylation by TBK1 on autophagosomes prevents their delipidation by ATG4 and premature removal from nascent autophagosomes. As to expression, ubiquitous. Expressed at high levels in the brain, heart, prostate, ovary, spleen and skeletal muscle. Expressed at very low levels in lung, thymus and small intestine.

The protein localises to the cytoplasmic vesicle. It localises to the autophagosome. Its subcellular location is the endoplasmic reticulum membrane. It is found in the golgi apparatus. Functionally, ubiquitin-like modifier involved in intra-Golgi traffic. Modulates intra-Golgi transport through coupling between NSF activity and SNAREs activation. It first stimulates the ATPase activity of NSF which in turn stimulates the association with GOSR1. Involved in autophagy. Plays a role in mitophagy which contributes to regulate mitochondrial quantity and quality by eliminating the mitochondria to a basal level to fulfill cellular energy requirements and preventing excess ROS production. Whereas LC3s are involved in elongation of the phagophore membrane, the GABARAP/GATE-16 subfamily is essential for a later stage in autophagosome maturation. The chain is Gamma-aminobutyric acid receptor-associated protein-like 2 from Bos taurus (Bovine).